The sequence spans 123 residues: MDLLHKNMKHLWFFLLLVAAPRWVLSQVQLQQWGAGLLKPSETLSLTCAVYGGSFSGYYWSWIRQPPGKGLEWIGEINHSGSTNYNPSLKSRVTISVDTSKNQFSLKLSSVTAADTAVYYCAR.

Residues 1–26 (MDLLHKNMKHLWFFLLLVAAPRWVLS) form the signal peptide. A v region region spans residues 26-123 (SQVQLQQWGA…ADTAVYYCAR (98 aa)). The interval 27-51 (QVQLQQWGAGLLKPSETLSLTCAVY) is framework-1. An Ig-like domain is found at 27–123 (QVQLQQWGAG…ADTAVYYCAR (97 aa)). Cysteines 48 and 121 form a disulfide. The complementarity-determining-1 stretch occupies residues 52 to 59 (GGSFSGYY). The tract at residues 60 to 76 (WSWIRQPPGKGLEWIGE) is framework-2. The tract at residues 77-83 (INHSGST) is complementarity-determining-2. The N-linked (GlcNAc...) asparagine glycan is linked to Asn78. Residues 84–121 (NYNPSLKSRVTISVDTSKNQFSLKLSSVTAADTAVYYC) are framework-3. Residues 122–123 (AR) form a complementarity-determining-3 region.

As to quaternary structure, immunoglobulins are composed of two identical heavy chains and two identical light chains; disulfide-linked.

The protein resides in the secreted. Its subcellular location is the cell membrane. V region of the variable domain of immunoglobulin heavy chains that participates in the antigen recognition. Immunoglobulins, also known as antibodies, are membrane-bound or secreted glycoproteins produced by B lymphocytes. In the recognition phase of humoral immunity, the membrane-bound immunoglobulins serve as receptors which, upon binding of a specific antigen, trigger the clonal expansion and differentiation of B lymphocytes into immunoglobulins-secreting plasma cells. Secreted immunoglobulins mediate the effector phase of humoral immunity, which results in the elimination of bound antigens. The antigen binding site is formed by the variable domain of one heavy chain, together with that of its associated light chain. Thus, each immunoglobulin has two antigen binding sites with remarkable affinity for a particular antigen. The variable domains are assembled by a process called V-(D)-J rearrangement and can then be subjected to somatic hypermutations which, after exposure to antigen and selection, allow affinity maturation for a particular antigen. The chain is Immunoglobulin heavy variable 4-34 from Homo sapiens (Human).